Reading from the N-terminus, the 74-residue chain is MTNVYSLDGILVFGLLFVCTCAYFKKVPRLKTWLLSEKKGVWGVFYKAAVIGTRLHAAVAIACVVMAFYVLFIK.

The N-terminal stretch at 1–22 is a signal peptide; the sequence is MTNVYSLDGILVFGLLFVCTCA. Over 23 to 52 the chain is Extracellular; that stretch reads YFKKVPRLKTWLLSEKKGVWGVFYKAAVIG. The chain crosses the membrane as a helical span at residues 53 to 73; it reads TRLHAAVAIACVVMAFYVLFI. Residue Lys74 is a topological domain, cytoplasmic.

This sequence belongs to the KISH family.

Its subcellular location is the golgi apparatus membrane. In terms of biological role, involved in the early part of the secretory pathway. In Homo sapiens (Human), this protein is Protein kish-B (TMEM167B).